A 446-amino-acid polypeptide reads, in one-letter code: Adenylosuccinate synthetase (446 aa).

Residues 12 to 18 and 40 to 42 contribute to the GTP site; these read GDEGKGK and GHT. The active-site Proton acceptor is the Asp-13. The Mg(2+) site is built by Asp-13 and Gly-40. IMP is bound by residues 13–16, 38–41, Thr-128, Arg-142, Gln-223, Thr-238, and Arg-302; these read DEGK and NAGH. The Proton donor role is filled by His-41. Residue 298 to 304 coordinates substrate; sequence TTTGRRR. Residues Arg-304, 330–332, and 412–414 contribute to the GTP site; these read KLD and SLG.

It belongs to the adenylosuccinate synthetase family. As to quaternary structure, homodimer. Mg(2+) is required as a cofactor.

Its subcellular location is the cytoplasm. The catalysed reaction is IMP + L-aspartate + GTP = N(6)-(1,2-dicarboxyethyl)-AMP + GDP + phosphate + 2 H(+). Its pathway is purine metabolism; AMP biosynthesis via de novo pathway; AMP from IMP: step 1/2. Plays an important role in the de novo pathway of purine nucleotide biosynthesis. Catalyzes the first committed step in the biosynthesis of AMP from IMP. The polypeptide is Adenylosuccinate synthetase (Crocosphaera subtropica (strain ATCC 51142 / BH68) (Cyanothece sp. (strain ATCC 51142))).